A 272-amino-acid chain; its full sequence is uncharacterized protein (272 aa).

This is an uncharacterized protein from Sinorhizobium fredii (strain NBRC 101917 / NGR234).